Here is a 122-residue protein sequence, read N- to C-terminus: UPF0482 protein Spro_2288 (122 aa).

A signal peptide spans 1-31; it reads MKTLSTQRLLRGMLPVAMLMLMGAWQAPALA. The tract at residues 46-71 is disordered; sequence SNSGAMSTEAARQSKQQFNDTKSLRN.

Belongs to the UPF0482 family.

This is UPF0482 protein Spro_2288 from Serratia proteamaculans (strain 568).